The sequence spans 316 residues: N-acetylmuramic acid 6-phosphate etherase (316 aa).

The interval 1 to 23 is disordered; that stretch reads MAGFDPTLQPSDDRGHLLTEQSN. Residues 66–229 form the SIS domain; it reads ISKRLSSGGR…STTVMVRLGK (164 aa). The active-site Proton donor is E94. E125 is a catalytic residue.

The protein belongs to the GCKR-like family. MurNAc-6-P etherase subfamily. As to quaternary structure, homodimer.

It catalyses the reaction N-acetyl-D-muramate 6-phosphate + H2O = N-acetyl-D-glucosamine 6-phosphate + (R)-lactate. The protein operates within amino-sugar metabolism; N-acetylmuramate degradation. In terms of biological role, specifically catalyzes the cleavage of the D-lactyl ether substituent of MurNAc 6-phosphate, producing GlcNAc 6-phosphate and D-lactate. The sequence is that of N-acetylmuramic acid 6-phosphate etherase from Synechococcus sp. (strain CC9902).